Here is a 169-residue protein sequence, read N- to C-terminus: Ribosome maturation factor RimM (169 aa).

Residues 97–169 (PGEYYWYQLI…VITVDWDMNF (73 aa)) enclose the PRC barrel domain.

The protein belongs to the RimM family. In terms of assembly, binds ribosomal protein uS19.

Its subcellular location is the cytoplasm. Its function is as follows. An accessory protein needed during the final step in the assembly of 30S ribosomal subunit, possibly for assembly of the head region. Essential for efficient processing of 16S rRNA. May be needed both before and after RbfA during the maturation of 16S rRNA. It has affinity for free ribosomal 30S subunits but not for 70S ribosomes. In Legionella pneumophila subsp. pneumophila (strain Philadelphia 1 / ATCC 33152 / DSM 7513), this protein is Ribosome maturation factor RimM.